The chain runs to 193 residues: Large ribosomal subunit protein uL11 (193 aa).

Belongs to the universal ribosomal protein uL11 family. Part of the ribosomal stalk of the 50S ribosomal subunit. Interacts with L10 and the large rRNA to form the base of the stalk. L10 forms an elongated spine to which L12 dimers bind in a sequential fashion forming a multimeric L10(L12)X complex. In terms of processing, one or more lysine residues are methylated.

Its function is as follows. Forms part of the ribosomal stalk which helps the ribosome interact with GTP-bound translation factors. In Mycoplasmopsis synoviae (strain 53) (Mycoplasma synoviae), this protein is Large ribosomal subunit protein uL11.